We begin with the raw amino-acid sequence, 243 residues long: DNA repair protein RecO (243 aa).

It belongs to the RecO family.

Involved in DNA repair and RecF pathway recombination. This is DNA repair protein RecO from Vibrio parahaemolyticus serotype O3:K6 (strain RIMD 2210633).